The chain runs to 355 residues: Protein RecA (355 aa).

Residue 65 to 72 (GPESSGKT) coordinates ATP.

This sequence belongs to the RecA family.

It localises to the cytoplasm. Can catalyze the hydrolysis of ATP in the presence of single-stranded DNA, the ATP-dependent uptake of single-stranded DNA by duplex DNA, and the ATP-dependent hybridization of homologous single-stranded DNAs. It interacts with LexA causing its activation and leading to its autocatalytic cleavage. The chain is Protein RecA from Pseudomonas putida (strain W619).